The chain runs to 472 residues: 3-isopropylmalate dehydratase large subunit (472 aa).

Positions 353, 414, and 417 each coordinate [4Fe-4S] cluster.

This sequence belongs to the aconitase/IPM isomerase family. LeuC type 1 subfamily. As to quaternary structure, heterodimer of LeuC and LeuD. Requires [4Fe-4S] cluster as cofactor.

The enzyme catalyses (2R,3S)-3-isopropylmalate = (2S)-2-isopropylmalate. The protein operates within amino-acid biosynthesis; L-leucine biosynthesis; L-leucine from 3-methyl-2-oxobutanoate: step 2/4. Catalyzes the isomerization between 2-isopropylmalate and 3-isopropylmalate, via the formation of 2-isopropylmaleate. The protein is 3-isopropylmalate dehydratase large subunit of Acinetobacter baumannii (strain ACICU).